A 92-amino-acid polypeptide reads, in one-letter code: Putative pterin-4-alpha-carbinolamine dehydratase (92 aa).

This sequence belongs to the pterin-4-alpha-carbinolamine dehydratase family.

The enzyme catalyses (4aS,6R)-4a-hydroxy-L-erythro-5,6,7,8-tetrahydrobiopterin = (6R)-L-erythro-6,7-dihydrobiopterin + H2O. In Natronomonas pharaonis (strain ATCC 35678 / DSM 2160 / CIP 103997 / JCM 8858 / NBRC 14720 / NCIMB 2260 / Gabara) (Halobacterium pharaonis), this protein is Putative pterin-4-alpha-carbinolamine dehydratase.